We begin with the raw amino-acid sequence, 293 residues long: NAD kinase (293 aa).

D73 functions as the Proton acceptor in the catalytic mechanism. NAD(+) is bound by residues 73 to 74 (DG), 147 to 148 (NE), H158, R175, D177, 188 to 193 (TAYSLS), and Q248.

Belongs to the NAD kinase family. A divalent metal cation is required as a cofactor.

It is found in the cytoplasm. It carries out the reaction NAD(+) + ATP = ADP + NADP(+) + H(+). In terms of biological role, involved in the regulation of the intracellular balance of NAD and NADP, and is a key enzyme in the biosynthesis of NADP. Catalyzes specifically the phosphorylation on 2'-hydroxyl of the adenosine moiety of NAD to yield NADP. The sequence is that of NAD kinase from Photobacterium profundum (strain SS9).